Reading from the N-terminus, the 255-residue chain is Enolase-phosphatase E1 (255 aa).

Mg(2+) contacts are provided by Asp22 and Glu24. Substrate-binding positions include 136 to 137 and Lys173; that span reads SS. Position 199 (Asp199) interacts with Mg(2+).

Belongs to the HAD-like hydrolase superfamily. MasA/MtnC family. In terms of assembly, monomer. It depends on Mg(2+) as a cofactor.

It is found in the cytoplasm. Its subcellular location is the nucleus. The catalysed reaction is 5-methylsulfanyl-2,3-dioxopentyl phosphate + H2O = 1,2-dihydroxy-5-(methylsulfanyl)pent-1-en-3-one + phosphate. Its pathway is amino-acid biosynthesis; L-methionine biosynthesis via salvage pathway; L-methionine from S-methyl-5-thio-alpha-D-ribose 1-phosphate: step 3/6. It functions in the pathway amino-acid biosynthesis; L-methionine biosynthesis via salvage pathway; L-methionine from S-methyl-5-thio-alpha-D-ribose 1-phosphate: step 4/6. Functionally, bifunctional enzyme that catalyzes the enolization of 2,3-diketo-5-methylthiopentyl-1-phosphate (DK-MTP-1-P) into the intermediate 2-hydroxy-3-keto-5-methylthiopentenyl-1-phosphate (HK-MTPenyl-1-P), which is then dephosphorylated to form the acireductone 1,2-dihydroxy-3-keto-5-methylthiopentene (DHK-MTPene). In Verticillium alfalfae (strain VaMs.102 / ATCC MYA-4576 / FGSC 10136) (Verticillium wilt of alfalfa), this protein is Enolase-phosphatase E1.